An 88-amino-acid chain; its full sequence is uncharacterized protein (88 aa).

A signal peptide spans 1-25; that stretch reads MRAAFWVGCAALLLSACSSEPVQQA.

This is an uncharacterized protein from Escherichia coli O6:H1 (strain CFT073 / ATCC 700928 / UPEC).